The primary structure comprises 328 residues: D-cysteine desulfhydrase (328 aa).

K51 is subject to N6-(pyridoxal phosphate)lysine.

It belongs to the ACC deaminase/D-cysteine desulfhydrase family. As to quaternary structure, homodimer. Pyridoxal 5'-phosphate is required as a cofactor.

It catalyses the reaction D-cysteine + H2O = hydrogen sulfide + pyruvate + NH4(+) + H(+). Functionally, catalyzes the alpha,beta-elimination reaction of D-cysteine and of several D-cysteine derivatives. It could be a defense mechanism against D-cysteine. The polypeptide is D-cysteine desulfhydrase (Salmonella paratyphi B (strain ATCC BAA-1250 / SPB7)).